The primary structure comprises 229 residues: Putative N-acetylmannosamine-6-phosphate 2-epimerase 2 (229 aa).

Belongs to the NanE family.

It catalyses the reaction an N-acyl-D-glucosamine 6-phosphate = an N-acyl-D-mannosamine 6-phosphate. It functions in the pathway amino-sugar metabolism; N-acetylneuraminate degradation; D-fructose 6-phosphate from N-acetylneuraminate: step 3/5. Its function is as follows. Converts N-acetylmannosamine-6-phosphate (ManNAc-6-P) to N-acetylglucosamine-6-phosphate (GlcNAc-6-P). This Salmonella typhimurium (strain LT2 / SGSC1412 / ATCC 700720) protein is Putative N-acetylmannosamine-6-phosphate 2-epimerase 2 (nanE2).